The chain runs to 157 residues: ATP synthase subunit b (157 aa).

Residues 7-27 form a helical membrane-spanning segment; it reads LIAQLVVFFILAWVTMKFVWP.

This sequence belongs to the ATPase B chain family. As to quaternary structure, F-type ATPases have 2 components, F(1) - the catalytic core - and F(0) - the membrane proton channel. F(1) has five subunits: alpha(3), beta(3), gamma(1), delta(1), epsilon(1). F(0) has three main subunits: a(1), b(2) and c(10-14). The alpha and beta chains form an alternating ring which encloses part of the gamma chain. F(1) is attached to F(0) by a central stalk formed by the gamma and epsilon chains, while a peripheral stalk is formed by the delta and b chains.

Its subcellular location is the cell inner membrane. Its function is as follows. F(1)F(0) ATP synthase produces ATP from ADP in the presence of a proton or sodium gradient. F-type ATPases consist of two structural domains, F(1) containing the extramembraneous catalytic core and F(0) containing the membrane proton channel, linked together by a central stalk and a peripheral stalk. During catalysis, ATP synthesis in the catalytic domain of F(1) is coupled via a rotary mechanism of the central stalk subunits to proton translocation. In terms of biological role, component of the F(0) channel, it forms part of the peripheral stalk, linking F(1) to F(0). The protein is ATP synthase subunit b of Aromatoleum aromaticum (strain DSM 19018 / LMG 30748 / EbN1) (Azoarcus sp. (strain EbN1)).